The following is a 343-amino-acid chain: S-adenosylmethionine:tRNA ribosyltransferase-isomerase (343 aa).

Belongs to the QueA family. In terms of assembly, monomer.

Its subcellular location is the cytoplasm. It carries out the reaction 7-aminomethyl-7-carbaguanosine(34) in tRNA + S-adenosyl-L-methionine = epoxyqueuosine(34) in tRNA + adenine + L-methionine + 2 H(+). Its pathway is tRNA modification; tRNA-queuosine biosynthesis. Functionally, transfers and isomerizes the ribose moiety from AdoMet to the 7-aminomethyl group of 7-deazaguanine (preQ1-tRNA) to give epoxyqueuosine (oQ-tRNA). The chain is S-adenosylmethionine:tRNA ribosyltransferase-isomerase from Dehalococcoides mccartyi (strain CBDB1).